Here is a 495-residue protein sequence, read N- to C-terminus: UDP-N-acetylmuramate--L-alanine ligase (495 aa).

122–128 provides a ligand contact to ATP; that stretch reads GTHGKTT.

Belongs to the MurCDEF family.

The protein resides in the cytoplasm. The catalysed reaction is UDP-N-acetyl-alpha-D-muramate + L-alanine + ATP = UDP-N-acetyl-alpha-D-muramoyl-L-alanine + ADP + phosphate + H(+). It functions in the pathway cell wall biogenesis; peptidoglycan biosynthesis. Functionally, cell wall formation. The sequence is that of UDP-N-acetylmuramate--L-alanine ligase from Mycobacterium leprae (strain TN).